Consider the following 375-residue polypeptide: tRNA-specific 2-thiouridylase MnmA (375 aa).

Residues 12 to 19 and M38 contribute to the ATP site; that span reads GMSGGVDS. The interaction with target base in tRNA stretch occupies residues 98–100; that stretch reads NPD. C103 acts as the Nucleophile in catalysis. A disulfide bridge links C103 with C200. G127 is an ATP binding site. An interaction with tRNA region spans residues 150–152; it reads KDQ. Residue C200 is the Cysteine persulfide intermediate of the active site. Positions 312–313 are interaction with tRNA; the sequence is RY.

This sequence belongs to the MnmA/TRMU family.

The protein localises to the cytoplasm. The enzyme catalyses S-sulfanyl-L-cysteinyl-[protein] + uridine(34) in tRNA + AH2 + ATP = 2-thiouridine(34) in tRNA + L-cysteinyl-[protein] + A + AMP + diphosphate + H(+). Functionally, catalyzes the 2-thiolation of uridine at the wobble position (U34) of tRNA, leading to the formation of s(2)U34. In Lactobacillus delbrueckii subsp. bulgaricus (strain ATCC 11842 / DSM 20081 / BCRC 10696 / JCM 1002 / NBRC 13953 / NCIMB 11778 / NCTC 12712 / WDCM 00102 / Lb 14), this protein is tRNA-specific 2-thiouridylase MnmA.